A 219-amino-acid chain; its full sequence is Isovaleryl-homoserine lactone synthase (219 aa).

Belongs to the autoinducer synthase family.

It carries out the reaction 3-methylbutanoyl-CoA + S-adenosyl-L-methionine = N-isovaleryl-L-homoserine lactone + S-methyl-5'-thioadenosine + CoA + H(+). In terms of biological role, catalyzes the synthesis of IV-HSL (isovaleryl-homoserine lactone), a quorum-sensing (QS) autoinducer molecule which binds to BjaR1 transcriptional regulator to activate expression of QS-dependent genes. Is active with isovaleryl-CoA but cannot use isovaleryl-ACP as acyl donor. This Bradyrhizobium diazoefficiens (strain JCM 10833 / BCRC 13528 / IAM 13628 / NBRC 14792 / USDA 110) protein is Isovaleryl-homoserine lactone synthase (bjaI).